A 622-amino-acid polypeptide reads, in one-letter code: 1-deoxy-D-xylulose-5-phosphate synthase (622 aa).

Residues H80 and 121–123 each bind thiamine diphosphate; that span reads GHS. Residue D152 coordinates Mg(2+). Residues 153 to 154, N181, Y288, and E369 contribute to the thiamine diphosphate site; that span reads GA. A Mg(2+)-binding site is contributed by N181.

Belongs to the transketolase family. DXPS subfamily. As to quaternary structure, homodimer. It depends on Mg(2+) as a cofactor. Requires thiamine diphosphate as cofactor.

The catalysed reaction is D-glyceraldehyde 3-phosphate + pyruvate + H(+) = 1-deoxy-D-xylulose 5-phosphate + CO2. The protein operates within metabolic intermediate biosynthesis; 1-deoxy-D-xylulose 5-phosphate biosynthesis; 1-deoxy-D-xylulose 5-phosphate from D-glyceraldehyde 3-phosphate and pyruvate: step 1/1. Functionally, catalyzes the acyloin condensation reaction between C atoms 2 and 3 of pyruvate and glyceraldehyde 3-phosphate to yield 1-deoxy-D-xylulose-5-phosphate (DXP). The polypeptide is 1-deoxy-D-xylulose-5-phosphate synthase (Psychromonas ingrahamii (strain DSM 17664 / CCUG 51855 / 37)).